The following is a 314-amino-acid chain: tRNA dimethylallyltransferase (314 aa).

11 to 18 provides a ligand contact to ATP; that stretch reads GPTGSGKT. 13–18 provides a ligand contact to substrate; that stretch reads TGSGKT. Residues 36–39 form an interaction with substrate tRNA region; sequence DSMQ.

This sequence belongs to the IPP transferase family. In terms of assembly, monomer. Mg(2+) is required as a cofactor.

It carries out the reaction adenosine(37) in tRNA + dimethylallyl diphosphate = N(6)-dimethylallyladenosine(37) in tRNA + diphosphate. Its function is as follows. Catalyzes the transfer of a dimethylallyl group onto the adenine at position 37 in tRNAs that read codons beginning with uridine, leading to the formation of N6-(dimethylallyl)adenosine (i(6)A). The chain is tRNA dimethylallyltransferase from Chlamydia trachomatis serovar D (strain ATCC VR-885 / DSM 19411 / UW-3/Cx).